Reading from the N-terminus, the 283-residue chain is Release factor glutamine methyltransferase (283 aa).

S-adenosyl-L-methionine contacts are provided by residues 121–125 (GTGSG), Asp-144, and Asn-188. 188-191 (NPPY) serves as a coordination point for substrate.

Belongs to the protein N5-glutamine methyltransferase family. PrmC subfamily.

It catalyses the reaction L-glutaminyl-[peptide chain release factor] + S-adenosyl-L-methionine = N(5)-methyl-L-glutaminyl-[peptide chain release factor] + S-adenosyl-L-homocysteine + H(+). Methylates the class 1 translation termination release factors RF1/PrfA and RF2/PrfB on the glutamine residue of the universally conserved GGQ motif. The polypeptide is Release factor glutamine methyltransferase (Bacillus anthracis).